Consider the following 340-residue polypeptide: Arginine N-succinyltransferase subunit beta (340 aa).

This sequence belongs to the succinylarginine dihydrolase family. As to quaternary structure, heterotetramer of two alpha and two beta subunits.

It carries out the reaction succinyl-CoA + L-arginine = N(2)-succinyl-L-arginine + CoA + H(+). The protein operates within amino-acid degradation; L-arginine degradation via AST pathway; L-glutamate and succinate from L-arginine: step 1/5. This is Arginine N-succinyltransferase subunit beta (aruG) from Pseudomonas aeruginosa (strain ATCC 15692 / DSM 22644 / CIP 104116 / JCM 14847 / LMG 12228 / 1C / PRS 101 / PAO1).